The chain runs to 127 residues: Glycine cleavage system H protein (127 aa).

One can recognise a Lipoyl-binding domain in the interval 22-104 (QVVIGITHFA…YEGAWMVKVE (83 aa)). An N6-lipoyllysine modification is found at Lys63.

It belongs to the GcvH family. The glycine cleavage system is composed of four proteins: P, T, L and H. It depends on (R)-lipoate as a cofactor.

Functionally, the glycine cleavage system catalyzes the degradation of glycine. The H protein shuttles the methylamine group of glycine from the P protein to the T protein. Its function is as follows. Is also involved in protein lipoylation via its role as an octanoyl/lipoyl carrier protein intermediate. This Bacillus cytotoxicus (strain DSM 22905 / CIP 110041 / 391-98 / NVH 391-98) protein is Glycine cleavage system H protein.